A 486-amino-acid polypeptide reads, in one-letter code: Transcription factor aptf-4 (486 aa).

Disordered regions lie at residues 25 to 49 (CEPS…SAKM) and 150 to 173 (LSTT…NQEK). Residues 150–169 (LSTTSANFTPDWNTTTNGPC) are compositionally biased toward polar residues. The tract at residues 301-430 (QRQRKVTCFS…IVEQAALYCE (130 aa)) is H-S-H (helix-span-helix), dimerization.

It belongs to the AP-2 family. As to quaternary structure, binds DNA as a dimer.

It localises to the nucleus. Functionally, sequence-specific DNA-binding protein that interacts with enhancer elements to regulate transcription of selected genes. Required for neuroblast and epidermal morphogenesis, perhaps acting in cooperation with transcription factor aptf-2. The protein is Transcription factor aptf-4 of Caenorhabditis elegans.